The primary structure comprises 99 residues: Nucleoid-associated protein SPN23F10240 (99 aa).

The protein belongs to the YbaB/EbfC family. As to quaternary structure, homodimer.

It localises to the cytoplasm. The protein resides in the nucleoid. Functionally, binds to DNA and alters its conformation. May be involved in regulation of gene expression, nucleoid organization and DNA protection. This Streptococcus pneumoniae (strain ATCC 700669 / Spain 23F-1) protein is Nucleoid-associated protein SPN23F10240.